The chain runs to 64 residues: Chassatide C7 (64 aa).

Positions 1-35 (VLVASLVMLEAQSSDTIQVPDWGKRLLMNHDSNRV) are cleaved as a propeptide — removed in mature form. Intrachain disulfides connect C39–C55, C43–C57, and C48–C62.

As to expression, expressed in fruit, pedicel, root and stem but not in leaf (at protein level).

Its function is as follows. Probably participates in a plant defense mechanism. Active against E.coli ATTC25922 but not against S.aureus ATCC 12600 or S.epidermidis ATCC 14990. Has cytotoxic and hemolytic activity. The polypeptide is Chassatide C7 (Chassalia chartacea (Chassalia curviflora)).